Consider the following 772-residue polypeptide: MPVFPFCRPMTCAGLAAALVAFSVGVQAQPAPADASAQIRYTRYGVPHIVAKDERGLGYGVGYAYAQDNLCLLANEVLTVSGERSRYFGAKGQTLEQRDNLASDLFFTWLNSPAAVDAFLQAQPASVQALLAGYASGYNRALVERRRQGLPAECGDGEWVRPISSQDLVKLTRRLLAEGGVGQFVEALAGAQPPTLARAQSSAGFASALARQERFAAERGSNAVAVGAQRSANGRGLLLANPHFPWMGGMRFYQMQLTIPGQLDVMGAALPGLPVVNIGFNQHLAWTHTVDTSKHFTLYRLQLDPKDPTRYVLDGKSLPMARQTIRVAVKGTDGSLSQIERQVYSSQFGPVVQWPGRLDWDAQAAYSVRDANLENSRVLQQWYQINRADSLAALKGSVEQLQGIPWVNTLAVDQGGRALYLNQSVVPYVDQQLLDTCSNPQAQGRLVVLDGSRSACQWKVDAQAAQPGIFPARLLPSLEREDFVQNSNDPAWMANPAQPLTGYSPLVSRNDQPLGMRGRFALQRLQGKARLGVDELQRMVTDEEVYLASLVLPDLLQWCKGASADVQAVCSSLAAWNGKADLDSGMGLVHFQNLFNALAEHPESWRVAFNPADPQHTPRGLAVEQAAVSRLVHQAALASLKQVSESGVAGAARWGQVQQALDGTPVPGGPQALGVYNAIYSVPHGQGKRLVVSGTSYLQLVSFTDKGPEARGLLAFSQSSEKASAHASDQTKAFAAKQLALIPFTEAQIKADPEYREVVISERDKGAVVSQP.

The first 28 residues, 1-28 (MPVFPFCRPMTCAGLAAALVAFSVGVQA), serve as a signal peptide directing secretion. Residues 199–220 (AQSSAGFASALARQERFAAERG) constitute a propeptide, spacer peptide. The active-site Nucleophile is the S221.

This sequence belongs to the peptidase S45 family. Heterodimer of an alpha subunit and a beta subunit processed from the same precursor.

It is found in the periplasm. The catalysed reaction is an N-acyl-L-homoserine lactone + H2O = L-homoserine lactone + a carboxylate. Functionally, catalyzes the deacylation of acyl-homoserine lactone (AHL or acyl-HSL), releasing homoserine lactone (HSL) and the corresponding fatty acid. Possesses a specificity for the degradation of long-chain acyl-HSLs (side chains of 11 to 14 carbons in length). This chain is Acyl-homoserine lactone acylase PvdQ (pvdQ), found in Pseudomonas putida (strain ATCC 47054 / DSM 6125 / CFBP 8728 / NCIMB 11950 / KT2440).